We begin with the raw amino-acid sequence, 195 residues long: ATP-dependent Clp protease proteolytic subunit (195 aa).

S94 (nucleophile) is an active-site residue. The active site involves H119.

It belongs to the peptidase S14 family. In terms of assembly, component of the chloroplastic Clp protease core complex.

Its subcellular location is the plastid. The protein resides in the chloroplast stroma. The catalysed reaction is Hydrolysis of proteins to small peptides in the presence of ATP and magnesium. alpha-casein is the usual test substrate. In the absence of ATP, only oligopeptides shorter than five residues are hydrolyzed (such as succinyl-Leu-Tyr-|-NHMec, and Leu-Tyr-Leu-|-Tyr-Trp, in which cleavage of the -Tyr-|-Leu- and -Tyr-|-Trp bonds also occurs).. Functionally, cleaves peptides in various proteins in a process that requires ATP hydrolysis. Has a chymotrypsin-like activity. Plays a major role in the degradation of misfolded proteins. The polypeptide is ATP-dependent Clp protease proteolytic subunit (Cycas taitungensis (Prince sago)).